The chain runs to 858 residues: Phosphoenolpyruvate carboxylase (858 aa).

Residues H145 and K531 contribute to the active site.

The protein belongs to the PEPCase type 1 family. The cofactor is Mg(2+).

It catalyses the reaction oxaloacetate + phosphate = phosphoenolpyruvate + hydrogencarbonate. Functionally, forms oxaloacetate, a four-carbon dicarboxylic acid source for the tricarboxylic acid cycle. This chain is Phosphoenolpyruvate carboxylase, found in Thermus thermophilus (strain ATCC BAA-163 / DSM 7039 / HB27).